A 163-amino-acid polypeptide reads, in one-letter code: SKP1-like protein 3 (163 aa).

The interaction with the F-box domain of F-box proteins stretch occupies residues 105–163 (LRAANYLNISGLLDLTCKAVADQMRGKTPAQMREHFNIKNDYTPEEEAEVRNENRWAFE).

The protein belongs to the SKP1 family. Part of a SCF (SKP1-cullin-F-box) protein ligase complex. Interacts with ADO3/FKF1 and At3g61590. In terms of tissue distribution, highly expressed in siliques.

The protein localises to the nucleus. Its pathway is protein modification; protein ubiquitination. Involved in ubiquitination and subsequent proteasomal degradation of target proteins. Together with CUL1, RBX1 and a F-box protein, it forms a SCF E3 ubiquitin ligase complex. The functional specificity of this complex depends on the type of F-box protein. In the SCF complex, it serves as an adapter that links the F-box protein to CUL1. This Arabidopsis thaliana (Mouse-ear cress) protein is SKP1-like protein 3 (ASK3).